Reading from the N-terminus, the 120-residue chain is Large ribosomal subunit protein bL17 (120 aa).

It belongs to the bacterial ribosomal protein bL17 family. Part of the 50S ribosomal subunit. Contacts protein L32.

This chain is Large ribosomal subunit protein bL17, found in Geobacillus sp. (strain WCH70).